A 1322-amino-acid chain; its full sequence is WD repeat-containing protein 17 (1322 aa).

WD repeat units follow at residues 81-121 (EHKK…VIAK), 123-164 (DSTK…SGVI), 171-211 (SFLS…QKHV), 221-261 (DEED…CITT), and 266-307 (SAAA…PIDN). Residues 328-352 (KFSVQSPTKNHYTSSTSEAVPPPTL) are disordered. Positions 330 to 345 (SVQSPTKNHYTSSTSE) are enriched in polar residues. WD repeat units follow at residues 391–431 (GHVE…AVYT), 434–474 (GNEG…IIQR), 478–518 (HGTN…LHKY), 519–559 (KHPA…DQPL), 564–604 (GHTA…CINI), 607–647 (GHTA…CVDT), and 650–690 (DHGA…TPVQ).

The chain is WD repeat-containing protein 17 (WDR17) from Homo sapiens (Human).